A 127-amino-acid chain; its full sequence is Aspartate 1-decarboxylase (127 aa).

Residue S25 is the Schiff-base intermediate with substrate; via pyruvic acid of the active site. A Pyruvic acid (Ser) modification is found at S25. T57 contributes to the substrate binding site. Y58 (proton donor) is an active-site residue. 73–75 serves as a coordination point for substrate; the sequence is GAA.

Belongs to the PanD family. As to quaternary structure, heterooctamer of four alpha and four beta subunits. Requires pyruvate as cofactor. Post-translationally, is synthesized initially as an inactive proenzyme, which is activated by self-cleavage at a specific serine bond to produce a beta-subunit with a hydroxyl group at its C-terminus and an alpha-subunit with a pyruvoyl group at its N-terminus.

The protein localises to the cytoplasm. The enzyme catalyses L-aspartate + H(+) = beta-alanine + CO2. It participates in cofactor biosynthesis; (R)-pantothenate biosynthesis; beta-alanine from L-aspartate: step 1/1. In terms of biological role, catalyzes the pyruvoyl-dependent decarboxylation of aspartate to produce beta-alanine. This is Aspartate 1-decarboxylase from Staphylococcus aureus (strain JH1).